Consider the following 395-residue polypeptide: Cysteine synthase 2 (395 aa).

Residues 6–22 (QDLASGIAMGAVFMYLL) traverse the membrane as a helical segment. The residue at position 83 (K83) is an N6-(pyridoxal phosphate)lysine. Residues 228–232 (GTGGT) and S335 each bind pyridoxal 5'-phosphate.

The protein belongs to the cysteine synthase/cystathionine beta-synthase family. The cofactor is pyridoxal 5'-phosphate.

It localises to the mitochondrion. The protein localises to the mitochondrion outer membrane. It carries out the reaction O-acetyl-L-serine + hydrogen sulfide = L-cysteine + acetate. Putative cysteine synthase that catalyzes the conversion of O-acetyl-L-serine (OAS) into cysteine, the last step in the cysteine biosynthesis pathway. However, in contrast to cysteine synthase cys11, this CS-like protein seems not to function in cysteine biosynthesis, at least under normal growth conditions, although the transcript is produced. The polypeptide is Cysteine synthase 2 (cys12) (Schizosaccharomyces pombe (strain 972 / ATCC 24843) (Fission yeast)).